A 655-amino-acid polypeptide reads, in one-letter code: Very long-chain specific acyl-CoA dehydrogenase, mitochondrial (655 aa).

The transit peptide at 1 to 40 directs the protein to the mitochondrion; sequence MQAARMAASLGRQLLRLGGGSSRLTALLGQPRPGPARRPY. Residues 23-42 are disordered; it reads RLTALLGQPRPGPARRPYAG. The catalytic stretch occupies residues 41 to 482; sequence AGGAAQLALD…ALQGCMDKGK (442 aa). Lys51 carries the post-translational modification N6-acetyllysine. Lys71 bears the N6-acetyllysine; alternate mark. Lys71 is modified (N6-succinyllysine; alternate). An N6-succinyllysine modification is found at Lys195. 214–223 lines the FAD pocket; it reads FCLTEPSSGS. Cys237 carries the S-nitrosocysteine modification. Lys239 is subject to N6-acetyllysine; alternate. N6-succinyllysine; alternate is present on Lys239. 249–251 is an FAD binding site; sequence WIS. 2 positions are modified to N6-acetyllysine; alternate: Lys276 and Lys278. 2 positions are modified to N6-succinyllysine; alternate: Lys276 and Lys278. Lys298 is modified (N6-acetyllysine). Residue Lys331 is modified to N6-acetyllysine; alternate. An N6-succinyllysine; alternate modification is found at Lys331. Lys372 carries the N6-succinyllysine modification. 461–463 is a substrate binding site; the sequence is FEG. The Proton acceptor role is filled by Glu462. 464-466 is a binding site for FAD; sequence TND. Lys482 is subject to N6-acetyllysine; alternate. Lys482 carries the N6-succinyllysine; alternate modification. Positions 483–516 are membrane-anchoring; it reads ELSGLGSALKNPFGNAGLLLGEAGKQLRRRAGLG. Ser517 and Ser522 each carry phosphoserine. Lys550 is subject to N6-acetyllysine. Lys556 bears the N6-acetyllysine; alternate mark. Position 556 is an N6-succinyllysine; alternate (Lys556). Residue Gln562 participates in FAD binding. The residue at position 639 (Lys639) is an N6-succinyllysine.

Belongs to the acyl-CoA dehydrogenase family. Homodimer. Homodimerizes after import into the mitochondrion. It depends on FAD as a cofactor. Post-translationally, S-nitrosylation at Cys-237 in liver improves catalytic efficiency. In terms of tissue distribution, predominantly expressed in heart and skeletal muscle (at protein level). Also detected in kidney and liver (at protein level).

The protein resides in the mitochondrion inner membrane. It carries out the reaction a very-long-chain 2,3-saturated fatty acyl-CoA + oxidized [electron-transfer flavoprotein] + H(+) = a very-long-chain (2E)-enoyl-CoA + reduced [electron-transfer flavoprotein]. The enzyme catalyses decanoyl-CoA + oxidized [electron-transfer flavoprotein] + H(+) = (2E)-decenoyl-CoA + reduced [electron-transfer flavoprotein]. It catalyses the reaction dodecanoyl-CoA + oxidized [electron-transfer flavoprotein] + H(+) = (2E)-dodecenoyl-CoA + reduced [electron-transfer flavoprotein]. The catalysed reaction is tetradecanoyl-CoA + oxidized [electron-transfer flavoprotein] + H(+) = (2E)-tetradecenoyl-CoA + reduced [electron-transfer flavoprotein]. It carries out the reaction oxidized [electron-transfer flavoprotein] + hexadecanoyl-CoA + H(+) = (2E)-hexadecenoyl-CoA + reduced [electron-transfer flavoprotein]. The enzyme catalyses octadecanoyl-CoA + oxidized [electron-transfer flavoprotein] + H(+) = (2E)-octadecenoyl-CoA + reduced [electron-transfer flavoprotein]. It catalyses the reaction eicosanoyl-CoA + oxidized [electron-transfer flavoprotein] + H(+) = (2E)-eicosenoyl-CoA + reduced [electron-transfer flavoprotein]. The catalysed reaction is docosanoyl-CoA + oxidized [electron-transfer flavoprotein] + H(+) = (2E)-docosenoyl-CoA + reduced [electron-transfer flavoprotein]. It carries out the reaction tetracosanoyl-CoA + oxidized [electron-transfer flavoprotein] + H(+) = (2E)-tetracosenoyl-CoA + reduced [electron-transfer flavoprotein]. The enzyme catalyses (9Z)-hexadecenoyl-CoA + oxidized [electron-transfer flavoprotein] + H(+) = (2E,9Z)-hexadecadienoyl-CoA + reduced [electron-transfer flavoprotein]. It catalyses the reaction oxidized [electron-transfer flavoprotein] + (9Z)-octadecenoyl-CoA + H(+) = (2E,9Z)-octadecadienoyl-CoA + reduced [electron-transfer flavoprotein]. Its pathway is lipid metabolism; mitochondrial fatty acid beta-oxidation. Very long-chain specific acyl-CoA dehydrogenase is one of the acyl-CoA dehydrogenases that catalyze the first step of mitochondrial fatty acid beta-oxidation, an aerobic process breaking down fatty acids into acetyl-CoA and allowing the production of energy from fats. The first step of fatty acid beta-oxidation consists in the removal of one hydrogen from C-2 and C-3 of the straight-chain fatty acyl-CoA thioester, resulting in the formation of trans-2-enoyl-CoA. Among the different mitochondrial acyl-CoA dehydrogenases, very long-chain specific acyl-CoA dehydrogenase acts specifically on acyl-CoAs with saturated 12 to 24 carbons long primary chains. This Homo sapiens (Human) protein is Very long-chain specific acyl-CoA dehydrogenase, mitochondrial.